A 299-amino-acid polypeptide reads, in one-letter code: Cold shock protein 1 (299 aa).

Alanine 2 bears the N-acetylalanine mark. In terms of domain architecture, CSD spans 12 to 76 (TGKVNWFNAS…GKTKAVNVTA (65 aa)). Residues 76-97 (APGGGSLKKENNSRGNGARRGG) form a disordered region. 7 CCHC-type zinc fingers span residues 100-117 (SGCY…DCGI), 132-149 (EGCY…DCTS), 164-181 (DGCY…DCTQ), 198-215 (DGCY…DCTQ), 230-247 (GTCY…DCAT), 253-270 (RGCY…DCDQ), and 280-297 (NACY…ECSS).

It belongs to the cold shock protein (CSP) family. Mostly expressed in shoot apices and siliques, and, to a lower extent, in roots, cotyledons, stems, shoots, leaves, floral buds and flowers.

Its subcellular location is the nucleus. It localises to the cytoplasm. In terms of biological role, chaperone that binds to RNA, single- (ssDNA) and double-stranded (dsDNA) DNA, and unwinds nucleic acid duplex. Exhibits a DNA melting activity. May be involved in cold resistance. Prevents seed germination under dehydration or salt stress conditions. The chain is Cold shock protein 1 (CSP1) from Arabidopsis thaliana (Mouse-ear cress).